The sequence spans 277 residues: Type II restriction enzyme EcoRI (277 aa).

Active-site residues include Asp91, Glu111, and Lys113. Residues Asp91 and Glu111 each contribute to the Mg(2+) site.

It belongs to the EcoRI type II restriction endonuclease family. Homodimer. Requires Mg(2+) as cofactor.

The catalysed reaction is Endonucleolytic cleavage of DNA to give specific double-stranded fragments with terminal 5'-phosphates.. In terms of biological role, a P subtype restriction enzyme that recognizes the double-stranded sequence 5'-GAATTC-3' and cleaves after G-1. The protein is Type II restriction enzyme EcoRI (ecoRIR) of Escherichia coli.